Reading from the N-terminus, the 76-residue chain is DNA-directed RNA polymerase subunit epsilon (76 aa).

The protein belongs to the RNA polymerase subunit epsilon family. RNAP is composed of a core of 2 alpha, a beta and a beta' subunit. The core is associated with a delta subunit, and at least one of epsilon or omega. When a sigma factor is associated with the core the holoenzyme is formed, which can initiate transcription.

The enzyme catalyses RNA(n) + a ribonucleoside 5'-triphosphate = RNA(n+1) + diphosphate. Functionally, a non-essential component of RNA polymerase (RNAP). This Streptococcus thermophilus (strain CNRZ 1066) protein is DNA-directed RNA polymerase subunit epsilon.